The primary structure comprises 521 residues: Melanopsin (521 aa).

At 1–71 (MDSPSGPRVL…VDVPDHAHYT (71 aa)) the chain is on the extracellular side. 2 N-linked (GlcNAc...) asparagine glycosylation sites follow: N30 and N34. The chain crosses the membrane as a helical span at residues 72-92 (LGTVILLVGLTGMLGNLTVIY). The Cytoplasmic portion of the chain corresponds to 93-106 (TFCRNRGLRTPANM). A helical membrane pass occupies residues 107 to 127 (FIINLAVSDFLMSVTQAPVFF). Residues 128–143 (ASSLYKKWLFGETGCE) lie on the Extracellular side of the membrane. Residues C142 and C220 are joined by a disulfide bond. Residues 144-164 (FYAFCGAVFGITSMITLTAIA) form a helical membrane-spanning segment. The Cytoplasmic segment spans residues 165–187 (MDRYLVITRPLATIGRGSKRRTA). Residues 188-208 (LVLLGVWLYALAWSLPPFFGW) traverse the membrane as a helical segment. Over 209–237 (SAYVPEGLLTSCSWDYMTFTPQVRAYTML) the chain is Extracellular. The helical transmembrane segment at 238 to 258 (LFCFVFFLPLLIIIFCYIFIF) threads the bilayer. Residues 259 to 293 (RAIRETGRACEGCGESPLRQRRQWQRLQSEWKMAK) lie on the Cytoplasmic side of the membrane. A helical transmembrane segment spans residues 294–314 (VALIVILLFVLSWAPYSTVAL). The Extracellular portion of the chain corresponds to 315-329 (VAFAGYSHILTPYMS). A helical membrane pass occupies residues 330-350 (SVPAVIAKASAIHNPIIYAIT). An N6-(retinylidene)lysine modification is found at K337. Residues 351–521 (HPKYRVAIAQ…LEDDVTLRHL (171 aa)) lie on the Cytoplasmic side of the membrane. A disordered region spans residues 445–486 (GELKASSSPQVQRSKTPKVPGPSTCRPMKGQGARPSSLRGDQ). The segment covering 449–458 (ASSSPQVQRS) has biased composition (polar residues).

The protein belongs to the G-protein coupled receptor 1 family. Opsin subfamily. Expressed in the retinal pigment epithelium and ganglion cell layer (at protein level). Also expressed in amacrine cell layers of the retina. Weakly expressed in vibrissae, and tail. As to expression, observed with processes in the outer strata of inner plexiform layer (IPL) close to the inner nuclear layer (INL) or is found to be bistratified with processes located both in the inner (ON) or outer (OFF) layers of the IPL (at protein level). A second population of isoform 1 is identified in processes which are confined to the inner layer of the IPL near to the ganglion cell layer (GCL) (at protein level). In terms of tissue distribution, about 40 times more abundant than isoform 1 in the retina (at protein level). Isoform 2 is involved in processes localized to the outer IPL or is bistratified with processes in both the inner and outer layers of the IPL (at protein level). Isoform 2 is absent in the processes confined only to the inner layer of the IPL (at protein level).

It localises to the cell membrane. Its subcellular location is the cell projection. It is found in the axon. The protein localises to the dendrite. The protein resides in the perikaryon. Photoreceptor that binds cis-retinaldehydes. Contributes to pupillar reflex, photoentrainment and other non-image forming responses to light. May be involved in the optokinetic visual tracking response. May be involved in the regulation of retinal hyaloid vessel growth and regression. The chain is Melanopsin (Opn4) from Mus musculus (Mouse).